Consider the following 122-residue polypeptide: Large ribosomal subunit protein uL14 (122 aa).

It belongs to the universal ribosomal protein uL14 family. Part of the 50S ribosomal subunit. Forms a cluster with proteins L3 and L19. In the 70S ribosome, L14 and L19 interact and together make contacts with the 16S rRNA in bridges B5 and B8.

Functionally, binds to 23S rRNA. Forms part of two intersubunit bridges in the 70S ribosome. In Acinetobacter baumannii (strain SDF), this protein is Large ribosomal subunit protein uL14.